The primary structure comprises 381 residues: MAFISSGYNPEKPMANRITDIGPRKFDEFFPPVIAKNFGSWLYHEILEPGVLMHVAESGDKVYTVRVGAARLMSITHIREMCDIADKYCGGHLRFTTRNNVEFMVADEASLKALKEDLASRKFDGGSLKFPIGGTGAGVSNIVHTQGWVHCHTPATDASGPVKAIMDEVFEDFQSMRLPAPVRISLACCINMCGAVHCSDIGVVGIHRKPPMIDHEWTDQLCEIPLAVASCPTAAVRPTKLEIGDKKVNTIAIKNERCMYCGNCYTMCPALPISDGEGDGVVIMVGGKVSNRISMPKFSKVVVAYIPNEPPRWPSLTKTIKHIIEVYSANAYKYERLGEWAERIGWERFFSLTGLEFSHHLIDDFRDPAYYTWRQSTQFKF.

The [4Fe-4S] cluster site is built by C151, C188, C189, C193, C231, C258, C261, and C264. C193 is a siroheme binding site. A 4Fe-4S ferredoxin-type domain is found at 249–276; it reads NTIAIKNERCMYCGNCYTMCPALPISDG.

In terms of assembly, heterohexamer of two alpha, two beta and two gamma subunits. Requires [4Fe-4S] cluster as cofactor. Siroheme is required as a cofactor.

The enzyme catalyses [DsrC protein]-trisulfide + NAD(+) + 3 H2O = [DsrC protein]-dithiol + sulfite + NADH + 3 H(+). Functionally, catalyzes the reduction of sulfite to sulfide. This is the terminal oxidation reaction in sulfate respiration, a process catalyzed by the sulfate-reducing bacteria. This chain is Sulfite reductase, dissimilatory-type subunit beta (dsvB), found in Nitratidesulfovibrio vulgaris (strain ATCC 29579 / DSM 644 / CCUG 34227 / NCIMB 8303 / VKM B-1760 / Hildenborough) (Desulfovibrio vulgaris).